The following is a 150-amino-acid chain: Large ribosomal subunit protein uL11 (150 aa).

This sequence belongs to the universal ribosomal protein uL11 family. In terms of assembly, part of the ribosomal stalk of the 50S ribosomal subunit. Interacts with L10 and the large rRNA to form the base of the stalk. L10 forms an elongated spine to which L12 dimers bind in a sequential fashion forming a multimeric L10(L12)X complex. Post-translationally, one or more lysine residues are methylated.

Functionally, forms part of the ribosomal stalk which helps the ribosome interact with GTP-bound translation factors. In Ureaplasma parvum serovar 3 (strain ATCC 27815 / 27 / NCTC 11736), this protein is Large ribosomal subunit protein uL11.